A 164-amino-acid polypeptide reads, in one-letter code: Neurotrophin-3 (164 aa).

Positions 1-3 are cleaved as a signal peptide; sequence IQS. Residues 4–120 constitute a propeptide that is removed on maturation; sequence TNMDQQGSLT…ALNRTSRRKR (117 aa). N-linked (GlcNAc...) asparagine glycosylation is present at Asn113.

This sequence belongs to the NGF-beta family.

It localises to the secreted. In terms of biological role, seems to promote the survival of visceral and proprioceptive sensory neurons. The protein is Neurotrophin-3 (NTF3) of Sanzinia madagascariensis (Madagascar tree boa).